A 132-amino-acid polypeptide reads, in one-letter code: Small ribosomal subunit protein uS8 (132 aa).

Part of the 30S ribosomal subunit. Contacts proteins S5 and S12. Post-translationally, a modified and unmodified form exist; the nature of the modification(s) is unknown.

One of the primary rRNA binding proteins, it binds directly to 16S rRNA central domain where it helps coordinate assembly of the platform of the 30S subunit. The polypeptide is Small ribosomal subunit protein uS8 (Rhodopseudomonas palustris (strain ATCC BAA-98 / CGA009)).